A 474-amino-acid polypeptide reads, in one-letter code: UDP-N-acetylmuramate--L-alanine ligase (474 aa).

ATP is bound at residue 116–122 (GTHGKTT).

This sequence belongs to the MurCDEF family.

It is found in the cytoplasm. It catalyses the reaction UDP-N-acetyl-alpha-D-muramate + L-alanine + ATP = UDP-N-acetyl-alpha-D-muramoyl-L-alanine + ADP + phosphate + H(+). The protein operates within cell wall biogenesis; peptidoglycan biosynthesis. Functionally, cell wall formation. The polypeptide is UDP-N-acetylmuramate--L-alanine ligase (Hyphomonas neptunium (strain ATCC 15444)).